A 316-amino-acid polypeptide reads, in one-letter code: 4-hydroxy-3-methylbut-2-enyl diphosphate reductase (316 aa).

A [4Fe-4S] cluster-binding site is contributed by C12. (2E)-4-hydroxy-3-methylbut-2-enyl diphosphate-binding residues include H41 and H74. The dimethylallyl diphosphate site is built by H41 and H74. Positions 41 and 74 each coordinate isopentenyl diphosphate. C96 is a [4Fe-4S] cluster binding site. H124 serves as a coordination point for (2E)-4-hydroxy-3-methylbut-2-enyl diphosphate. Dimethylallyl diphosphate is bound at residue H124. H124 lines the isopentenyl diphosphate pocket. E126 acts as the Proton donor in catalysis. T169 provides a ligand contact to (2E)-4-hydroxy-3-methylbut-2-enyl diphosphate. Residue C199 participates in [4Fe-4S] cluster binding. Residues S227, S228, N229, and S271 each contribute to the (2E)-4-hydroxy-3-methylbut-2-enyl diphosphate site. Residues S227, S228, N229, and S271 each coordinate dimethylallyl diphosphate. Isopentenyl diphosphate is bound by residues S227, S228, N229, and S271.

The protein belongs to the IspH family. The cofactor is [4Fe-4S] cluster.

The enzyme catalyses isopentenyl diphosphate + 2 oxidized [2Fe-2S]-[ferredoxin] + H2O = (2E)-4-hydroxy-3-methylbut-2-enyl diphosphate + 2 reduced [2Fe-2S]-[ferredoxin] + 2 H(+). It catalyses the reaction dimethylallyl diphosphate + 2 oxidized [2Fe-2S]-[ferredoxin] + H2O = (2E)-4-hydroxy-3-methylbut-2-enyl diphosphate + 2 reduced [2Fe-2S]-[ferredoxin] + 2 H(+). It participates in isoprenoid biosynthesis; dimethylallyl diphosphate biosynthesis; dimethylallyl diphosphate from (2E)-4-hydroxy-3-methylbutenyl diphosphate: step 1/1. The protein operates within isoprenoid biosynthesis; isopentenyl diphosphate biosynthesis via DXP pathway; isopentenyl diphosphate from 1-deoxy-D-xylulose 5-phosphate: step 6/6. Functionally, catalyzes the conversion of 1-hydroxy-2-methyl-2-(E)-butenyl 4-diphosphate (HMBPP) into a mixture of isopentenyl diphosphate (IPP) and dimethylallyl diphosphate (DMAPP). Acts in the terminal step of the DOXP/MEP pathway for isoprenoid precursor biosynthesis. The protein is 4-hydroxy-3-methylbut-2-enyl diphosphate reductase of Xylella fastidiosa (strain M23).